The primary structure comprises 473 residues: Photosystem II CP43 reaction center protein (473 aa).

A propeptide spanning residues 1–14 (MKTLYSLRRFYHVE) is cleaved from the precursor. Thr-15 is subject to N-acetylthreonine. A Phosphothreonine modification is found at Thr-15. Helical transmembrane passes span 69 to 93 (LFEV…PHLA), 134 to 155 (LIGP…KDKN), 178 to 200 (KACY…RIIT), 255 to 275 (KPWA…LSYS), and 291 to 312 (WFNN…ASQA). Glu-367 is a binding site for [CaMn4O5] cluster. Residues 447–471 (RARAAAAGFEKGIERETEPVLFMKP) form a helical membrane-spanning segment.

The protein belongs to the PsbB/PsbC family. PsbC subfamily. In terms of assembly, PSII is composed of 1 copy each of membrane proteins PsbA, PsbB, PsbC, PsbD, PsbE, PsbF, PsbH, PsbI, PsbJ, PsbK, PsbL, PsbM, PsbT, PsbX, PsbY, PsbZ, Psb30/Ycf12, at least 3 peripheral proteins of the oxygen-evolving complex and a large number of cofactors. It forms dimeric complexes. The cofactor is Binds multiple chlorophylls and provides some of the ligands for the Ca-4Mn-5O cluster of the oxygen-evolving complex. It may also provide a ligand for a Cl- that is required for oxygen evolution. PSII binds additional chlorophylls, carotenoids and specific lipids..

It is found in the plastid. The protein resides in the chloroplast thylakoid membrane. Its function is as follows. One of the components of the core complex of photosystem II (PSII). It binds chlorophyll and helps catalyze the primary light-induced photochemical processes of PSII. PSII is a light-driven water:plastoquinone oxidoreductase, using light energy to abstract electrons from H(2)O, generating O(2) and a proton gradient subsequently used for ATP formation. The protein is Photosystem II CP43 reaction center protein of Mesostigma viride (Green alga).